The following is a 498-amino-acid chain: Zinc finger protein 395 (498 aa).

Residues 129–165 (QKPLSSPIEQSLPTSPGATSTSAQRSVSRSIDVPKRR) are disordered. The segment covering 130–157 (KPLSSPIEQSLPTSPGATSTSAQRSVSR) has biased composition (polar residues). Residues 171–180 (MDEMMAAMVL) carry the Nuclear export signal motif. Residues 209-245 (KEGGDVSDSGSSTTSGHWSASSGVSTPSPPHTDASPK) are disordered. Residues 214-231 (VSDSGSSTTSGHWSASSG) show a composition bias toward low complexity. A C2H2-type zinc finger spans residues 285-310 (YKCLWPNCGKLLRSIVGIKRHVKTQH).

The protein resides in the cytoplasm. The protein localises to the nucleus. In Xenopus laevis (African clawed frog), this protein is Zinc finger protein 395 (znf395).